Reading from the N-terminus, the 515-residue chain is SWI/SNF-related matrix-associated actin-dependent regulator of chromatin subfamily D member 1 (515 aa).

The interval 1–128 (MAARAGFQSV…RNHNAKKKKM (128 aa)) is disordered. Over residues 14-23 (GGAGASGGAG) the composition is skewed to gly residues. The segment at 43 to 167 (APGQGLYRSP…DQTIMRKRLD (125 aa)) is interaction with ESR1, NR1H4, NR3C1, PGR and SMARCA4. 2 positions are modified to asymmetric dimethylarginine: Arg68 and Arg88. Lys101 participates in a covalent cross-link: Glycyl lysine isopeptide (Lys-Gly) (interchain with G-Cter in SUMO2). The span at 104-117 (APQQIQQVQQQAVQ) shows a compositional bias: low complexity. The tract at residues 168 to 474 (IQEALKRPIK…TMTDVVGNPE (307 aa)) is interaction with SMARCC1 and SMARCC2. The interval 180–515 (RKLRIFISNT…LEQALGIRNT (336 aa)) is necessary for GR/NR3C1-mediated remodeling and transcription from chromatin; required for GR/NR3C1 interaction with the BRG1/SMARCA4 complex in vivo. Thr203 is modified (phosphothreonine). An N6-acetyllysine modification is found at Lys223. In terms of domain architecture, SWIB/MDM2 spans 290 to 367 (YQPPQFKLDP…PQRLHALLMP (78 aa)). A coiled-coil region spans residues 412–440 (ASQQEIATLDNKIHETIETINQLKTQREF).

This sequence belongs to the SMARCD family. In terms of assembly, component of the multiprotein chromatin-remodeling complexes SWI/SNF: SWI/SNF-A (BAF), SWI/SNF-B (PBAF) and related complexes. The canonical complex contains a catalytic subunit (either SMARCA4/BRG1/BAF190A or SMARCA2/BRM/BAF190B), and at least SMARCE1, ACTL6A/BAF53, SMARCC1/BAF155, SMARCC2/BAF170, and SMARCB1/SNF5/BAF47. Other subunits specific to each of the complexes may also be present permitting several possible combinations developmentally and tissue specific. Component of the BAF complex, which includes at least actin (ACTB), ARID1A/BAF250A, ARID1B/BAF250B, SMARCA2/BRM, SMARCA4/BRG1/BAF190A, ACTL6A/BAF53, ACTL6B/BAF53B, SMARCE1/BAF57, SMARCC1/BAF155, SMARCC2/BAF170, SMARCB1/SNF5/INI1, and one or more SMARCD1/BAF60A, SMARCD2/BAF60B, or SMARCD3/BAF60C. In muscle cells, the BAF complex also contains DPF3. Component of neural progenitors-specific chromatin remodeling complex (npBAF complex) composed of at least, ARID1A/BAF250A or ARID1B/BAF250B, SMARCD1/BAF60A, SMARCD3/BAF60C, SMARCA2/BRM/BAF190B, SMARCA4/BRG1/BAF190A, SMARCB1/BAF47, SMARCC1/BAF155, SMARCE1/BAF57, SMARCC2/BAF170, PHF10/BAF45A, ACTL6A/BAF53A and actin. Component of neuron-specific chromatin remodeling complex (nBAF complex) composed of at least, ARID1A/BAF250A or ARID1B/BAF250B, SMARCD1/BAF60A, SMARCD3/BAF60C, SMARCA2/BRM/BAF190B, SMARCA4/BRG1/BAF190A, SMARCB1/BAF47, SMARCC1/BAF155, SMARCE1/BAF57, SMARCC2/BAF170, DPF1/BAF45B, DPF3/BAF45C, ACTL6B/BAF53B and actin. Component of the SWI/SNF-B (PBAF) chromatin remodeling complex, at least composed of SMARCA4/BRG1, SMARCB1/BAF47/SNF5, ACTL6A/BAF53A or ACTL6B/BAF53B, SMARCE1/BAF57, SMARCD1/BAF60A, SMARCD2/BAF60B, perhaps SMARCD3/BAF60C, SMARCC1/BAF155, SMARCC2/BAF170, PBRM1/BAF180, ARID2/BAF200 and actin (ACTB). Component of SWI/SNF (GBAF) subcomplex, which includes at least BICRA or BICRAL (mutually exclusive), BRD9, SS18, SMARCA2/BRM, SMARCA4/BRG1/BAF190A, ACTL6A/BAF53, SMARCC1/BAF155, and SMARCD1/BAF60A. Specifically interacts with the VDR heterodimer complex. Interacts with ESR1, NR3C1, NR1H4, PGR, SMARCA4, SMARCC1 and SMARCC2. Interacts with DPF2. Interacts with DPF3a (isoform 2 of DPF3/BAF45C) and with HDGFL2 in a DPF3a-dependent manner. Interacts with FOS, FOSB isoform 1 and 2, FOSL1 and FOSL2. Interacts with AKIRIN2. As to expression, ubiquitous.

The protein localises to the nucleus. Its function is as follows. Involved in transcriptional activation and repression of select genes by chromatin remodeling (alteration of DNA-nucleosome topology). Component of SWI/SNF chromatin remodeling complexes that carry out key enzymatic activities, changing chromatin structure by altering DNA-histone contacts within a nucleosome in an ATP-dependent manner. Belongs to the neural progenitors-specific chromatin remodeling complex (npBAF complex) and the neuron-specific chromatin remodeling complex (nBAF complex). During neural development a switch from a stem/progenitor to a postmitotic chromatin remodeling mechanism occurs as neurons exit the cell cycle and become committed to their adult state. The transition from proliferating neural stem/progenitor cells to postmitotic neurons requires a switch in subunit composition of the npBAF and nBAF complexes. As neural progenitors exit mitosis and differentiate into neurons, npBAF complexes which contain ACTL6A/BAF53A and PHF10/BAF45A, are exchanged for homologous alternative ACTL6B/BAF53B and DPF1/BAF45B or DPF3/BAF45C subunits in neuron-specific complexes (nBAF). The npBAF complex is essential for the self-renewal/proliferative capacity of the multipotent neural stem cells. The nBAF complex along with CREST plays a role regulating the activity of genes essential for dendrite growth. Has a strong influence on vitamin D-mediated transcriptional activity from an enhancer vitamin D receptor element (VDRE). May be a link between mammalian SWI-SNF-like chromatin remodeling complexes and the vitamin D receptor (VDR) heterodimer. Mediates critical interactions between nuclear receptors and the BRG1/SMARCA4 chromatin-remodeling complex for transactivation. In Mus musculus (Mouse), this protein is SWI/SNF-related matrix-associated actin-dependent regulator of chromatin subfamily D member 1 (Smarcd1).